The primary structure comprises 2465 residues: Highly reducing polyketide synthase milA (2465 aa).

The Ketosynthase family 3 (KS3) domain occupies 1–434; it reads MEPIAIVGSA…GANCHVILEG (434 aa). Catalysis depends on for beta-ketoacyl synthase activity residues C172, H311, and H355. Residues 450–476 form a disordered region; sequence KPSLSSSPSLSPTSTSPPTPRTPANSL. The segment covering 451–463 has biased composition (low complexity); sequence PSLSSSPSLSPTS. Residues 567–888 are malonyl-CoA:ACP transacylase (MAT) domain; it reads VFTGQGAQWA…CGTLSRAVDD (322 aa). Residues 957–1096 form an N-terminal hotdog fold region; the sequence is HPLLGVRTNT…GKVQLFVGGD (140 aa). Positions 957-1265 are dehydratase (DH) domain; it reads HPLLGVRTNT…LTVSPVAPVT (309 aa). The PKS/mFAS DH domain maps to 957 to 1267; that stretch reads HPLLGVRTNT…VSPVAPVTAD (311 aa). The active-site Proton acceptor; for dehydratase activity is the H989. A C-terminal hotdog fold region spans residues 1111-1267; it reads LNEIDVDTFY…VSPVAPVTAD (157 aa). The Proton donor; for dehydratase activity role is filled by D1174. The disordered stretch occupies residues 1334 to 1367; sequence HSTNGLTNGHASTNGHGSTNGHISTNGHSTNGDV. The tract at residues 2095-2269 is ketoreductase (KR)domain; that stretch reads TYFLVGMAGS…AASVINLTGV (175 aa). The Carrier domain occupies 2384–2459; it reads DMIFRAFQTV…QVVWSVVHQI (76 aa). O-(pantetheine 4'-phosphoryl)serine is present on S2419.

It depends on pantetheine 4'-phosphate as a cofactor.

It catalyses the reaction 10 malonyl-CoA + acetyl-CoA + 3 AH2 + 8 NADPH + 18 H(+) = cordypyrone A + 3 A + 10 CO2 + 8 NADP(+) + 11 CoA + 8 H2O. The protein operates within secondary metabolite biosynthesis. Highly reducing polyketide synthase (HR-PKS); part of the gene cluster that mediates the biosynthesis of cordypyrones A and B, 2 pyrones that show modest activities against pathogenic bacteria including methicillin-resistant Staphylococcus aureus (MRSA), Mycobacterium tuberculosis and Bacillus cereus. The HR-PKS milA catalyzes the formation of cordypyrones A via condensation of one acetate with 10 malonate units. Since milA lacks an enoyl reductase domain, the 2 beta-keto processing domains DH and KR of milA collaborate with the trans-enoyl reductase milB to catalyze the different levels of reduction. The cytochrome P450 monooxygenase milC then hydroxylates the C-22 of cordypyrones A to yield cordypyrones B. This Cordyceps militaris (strain CM01) (Caterpillar fungus) protein is Highly reducing polyketide synthase milA.